A 324-amino-acid chain; its full sequence is Methionyl-tRNA formyltransferase (324 aa).

Position 109-112 (109-112 (SILP)) interacts with (6S)-5,6,7,8-tetrahydrofolate.

The protein belongs to the Fmt family.

It catalyses the reaction L-methionyl-tRNA(fMet) + (6R)-10-formyltetrahydrofolate = N-formyl-L-methionyl-tRNA(fMet) + (6S)-5,6,7,8-tetrahydrofolate + H(+). Attaches a formyl group to the free amino group of methionyl-tRNA(fMet). The formyl group appears to play a dual role in the initiator identity of N-formylmethionyl-tRNA by promoting its recognition by IF2 and preventing the misappropriation of this tRNA by the elongation apparatus. This is Methionyl-tRNA formyltransferase from Acidothermus cellulolyticus (strain ATCC 43068 / DSM 8971 / 11B).